Here is a 400-residue protein sequence, read N- to C-terminus: Haptoglobin (400 aa).

The N-terminal stretch at methionine 1 to alanine 18 is a signal peptide. Sushi domains follow at residues aspartate 28 to aspartate 83 and alanine 84 to alanine 141. Intrachain disulfides connect cysteine 49–cysteine 81, cysteine 105–cysteine 139, and cysteine 143–cysteine 260. The region spanning isoleucine 156–alanine 398 is the Peptidase S1 domain. 3 N-linked (GlcNAc...) asparagine glycosylation sites follow: asparagine 285, asparagine 309, and asparagine 315. Disulfide bonds link cysteine 303–cysteine 334 and cysteine 345–cysteine 375. The interval valine 312–threonine 317 is interaction with CD163.

The protein belongs to the peptidase S1 family. As to quaternary structure, tetramer of two alpha and two beta chains; disulfide-linked. The hemoglobin/haptoglobin complex is composed of a haptoglobin dimer bound to two hemoglobin alpha-beta dimers. Interacts with CD163. Interacts with ERGIC3. Expressed by the liver and secreted in plasma.

The protein resides in the secreted. Its subcellular location is the extracellular space. In terms of biological role, as a result of hemolysis, hemoglobin is found to accumulate in the kidney and is secreted in the urine. Haptoglobin captures, and combines with free plasma hemoglobin to allow hepatic recycling of heme iron and to prevent kidney damage. Haptoglobin also acts as an antioxidant, has antibacterial activity and plays a role in modulating many aspects of the acute phase response. Hemoglobin/haptoglobin complexes are rapidly cleared by the macrophage CD163 scavenger receptor expressed on the surface of liver Kupfer cells through an endocytic lysosomal degradation pathway. The protein is Haptoglobin (HP) of Cervus elaphus (Red deer).